The following is a 491-amino-acid chain: Glutamyl-tRNA(Gln) amidotransferase subunit A (491 aa).

Catalysis depends on charge relay system residues K76 and S154. Residue S178 is the Acyl-ester intermediate of the active site.

It belongs to the amidase family. GatA subfamily. In terms of assembly, heterotrimer of A, B and C subunits.

The enzyme catalyses L-glutamyl-tRNA(Gln) + L-glutamine + ATP + H2O = L-glutaminyl-tRNA(Gln) + L-glutamate + ADP + phosphate + H(+). Its function is as follows. Allows the formation of correctly charged Gln-tRNA(Gln) through the transamidation of misacylated Glu-tRNA(Gln) in organisms which lack glutaminyl-tRNA synthetase. The reaction takes place in the presence of glutamine and ATP through an activated gamma-phospho-Glu-tRNA(Gln). This chain is Glutamyl-tRNA(Gln) amidotransferase subunit A, found in Cereibacter sphaeroides (strain ATCC 17025 / ATH 2.4.3) (Rhodobacter sphaeroides).